We begin with the raw amino-acid sequence, 271 residues long: uncharacterized protein (271 aa).

Belongs to the HAD-like hydrolase superfamily.

This is an uncharacterized protein from Staphylococcus aureus (strain NCTC 8325 / PS 47).